The following is a 65-amino-acid chain: Large ribosomal subunit protein bL35 (65 aa).

It belongs to the bacterial ribosomal protein bL35 family.

In Buchnera aphidicola subsp. Acyrthosiphon pisum (strain 5A), this protein is Large ribosomal subunit protein bL35.